A 356-amino-acid polypeptide reads, in one-letter code: MSPCGRARRQTSRGAMAVLAWKFPRTRLPMGASALCVVVLCWLYIFPVYRLPNEKEIVQGVLQQGTAWRRNQTAARAFRKQMEDCCDPAHLFAMTKMNSPMGKSMWYDGEFLYSFTIDNSTYSLFPQATPFQLPLKKCAVVGNGGILKKSGCGRQIDEANFVMRCNLPPLSSEYTKDVGSKSQLVTANPSIIRQRFQNLLWSRKTFVDNMKIYNHSYIYMPAFSMKTGTEPSLRVYYTLSDVGANQTVLFANPNFLRSIGKFWKSRGIHAKRLSTGLFLVSAALGLCEEVAIYGFWPFSVNMHEQPISHHYYDNVLPFSGFHAMPEEFLQLWYLHKIGALRMQLDPCEDTSLQPTS.

Residues 1–29 are Cytoplasmic-facing; sequence MSPCGRARRQTSRGAMAVLAWKFPRTRLP. A helical; Signal-anchor for type II membrane protein membrane pass occupies residues 30–48; it reads MGASALCVVVLCWLYIFPV. The Lumenal segment spans residues 49–356; it reads YRLPNEKEIV…CEDTSLQPTS (308 aa). N-linked (GlcNAc...) asparagine glycans are attached at residues Asn-71 and Asn-119. Disulfide bonds link Cys-138/Cys-287 and Cys-152/Cys-347. Residues Asn-143 and Asn-166 each coordinate CMP-N-acetyl-beta-neuraminate. 2 N-linked (GlcNAc...) asparagine glycosylation sites follow: Asn-214 and Asn-245. Ser-274, Thr-275, Gly-276, Trp-296, and His-310 together coordinate CMP-N-acetyl-beta-neuraminate. Residue His-322 is the Proton donor/acceptor of the active site.

It belongs to the glycosyltransferase 29 family. Strongly expressed in melanoma cell lines, adult and fetal brain and to a lesser extent in adult and fetal lung.

The protein localises to the golgi apparatus membrane. It catalyses the reaction an N-acetyl-alpha-neuraminyl-(2-&gt;3)-beta-D-galactosyl derivative + CMP-N-acetyl-beta-neuraminate = an N-acetyl-alpha-neuraminyl-(2-&gt;8)-N-acetyl-alpha-neuraminyl-(2-&gt;3)-beta-D-galactosyl derivative + CMP + H(+). The catalysed reaction is a ganglioside GM3 (d18:1(4E)) + CMP-N-acetyl-beta-neuraminate = a ganglioside GD3 (d18:1(4E)) + CMP + H(+). The enzyme catalyses a ganglioside GD3 (d18:1(4E)) + CMP-N-acetyl-beta-neuraminate = a ganglioside GT3 (d18:1(4E)) + CMP + H(+). It carries out the reaction a ganglioside GD1a (d18:1(4E)) + CMP-N-acetyl-beta-neuraminate = a ganglioside GT1a (d18:1(4E)) + CMP + H(+). It catalyses the reaction a ganglioside GT1b (d18:1(4E)) + CMP-N-acetyl-beta-neuraminate = a ganglioside GQ1b (d18:1(4E)) + CMP + H(+). The catalysed reaction is a ganglioside GM1b (d18:1(4E)) + CMP-N-acetyl-beta-neuraminate = a ganglioside GD1c (d18:1(4E)) + CMP + H(+). The enzyme catalyses a ganglioside GD3 + CMP-N-acetyl-beta-neuraminate = a ganglioside GT3 + CMP + H(+). It carries out the reaction [alpha-N-acetylneuraminyl-(2-&gt;8)](n)-alpha-N-acetylneuraminyl-(2-&gt;8)-alpha-N-acetylneuraminyl-(2-&gt;3)-beta-D-galactosyl-(1-&gt;4)-beta-D-glucosyl-(1&lt;-&gt;1)-ceramide + CMP-N-acetyl-beta-neuraminate = [alpha-N-acetylneuraminyl-(2-&gt;8)](n+1)-alpha-N-acetylneuraminyl-(2-&gt;8)-alpha-N-acetylneuraminyl-(2-&gt;3)-beta-D-galactosyl-(1-&gt;4)-beta-D-glucosyl-(1&lt;-&gt;1)-ceramide + CMP + H(+). Its pathway is protein modification; protein glycosylation. It functions in the pathway lipid metabolism; sphingolipid metabolism. Functionally, catalyzes the addition of sialic acid in alpha 2,8-linkage to the sialic acid moiety of the ganglioside GM3 to form ganglioside GD3; gangliosides are a subfamily of complex glycosphingolipds that contain one or more residues of sialic acid. Can catalyze the addition of a second alpha-2,8-sialic acid to GD3 to form GT3. Can use GM1b, GD1a and GT1b as acceptor substrates to synthesize GD1c, GT1a and GQ1b respectively. Can synthesize unusual tetra- and pentasialylated lactosylceramide derivatives identified as GQ3 (II3Neu5Ac4-Gg2Cer) and GP3 (II3Neu5Ac5-Gg2Cer) in breast cancer cells. The chain is Alpha-N-acetylneuraminide alpha-2,8-sialyltransferase from Homo sapiens (Human).